A 1742-amino-acid chain; its full sequence is MWPAGAGTKLPCPRDSALRRAAFSGNLTALPSHLVPAGRSVRVFISANPEDTGAERQALRETVYPKLREFCRENYGLEFQVIDLYWGIEEDEWDSPELQKMRMKLLEECLKTSAGPCFVGLLGEKYGNIRIPGEVEASEFEMILDAAVEAKLETKLLEDWYCRDENSVPAAYYLRPRLEVPRSNKNSTQPSASSEQERPWQEISDEIKTIFKAAVKLLHEQGKMKQSQAKRYLFSAIEDEFDFALGKQTPAFLKKCVCYIRKIANIERFVKIPEMGKYMDITGTDPRIVRDPEAQEKLIKLRDEFIPTIVASSNLRVYTSVTHCDMKLGYSQEIENHYIEGLGKQFYEDMIDIIQATVQQNFDTETDTLYDEILQHSSLCKTYASFYEYKCESLNILHKYILPSKTGHINPLVVYGGPCTGKTLLLAEVAKKAYGWLHEDTGPDSDPVVIVRFLGTTDMSIDLRTLLLSVCEQLAVNYRCLVQSFPKKIHDLRDLFINLLNESSLQRPLVIILDALEQLSEADEARKLWWLPAHLPRFVRIILSTLPNKHGILQKLRCLIHEEDNYIELIPRDRKMCSQVLKHQLLRVKRKVTSGQQIYVNNAFSKCTLPMFVNLTFREVRHWRSHKDVDESSLCVTVHESIEQLFWSLEKKCGQKLVSRALGYITMAKMGLSEMELEDVLALDNSVMNELNENTRPSNPLRVPYLYIARLKEGLNGYLIERHVKNVTLLVWANRHLQLIAQKLYLQEDSNLREMHTILADYFLGVWSGGRRKAFCLEDPYLNGCLDLENRSLLEEEKHFMEQASFDRQAPDQPWVFQCNPLEPDIFFVNHRKMSELLYHLTRCGKTDDLLYGIIMNFSWLYTMIKIGQFDKVLADIELAYNYSQEKELKFLASTLRSIRNKVIAFPGSLSAELQQRLLPVVSSLPKLRHLLLECDKDGPKYCSIVPLHSSMDVTYSPERLPLASSHLHVTEILPTCNPSTVLTALENGSISTWDVETRQLLRQITTAQSVILGMKLSSDEKYLVVATTNNTLLIYDNVNSCLLSEVEIKGTKHGSGSTYINGFTLSVNHALAWLEASKDVTVIDLLYGWPLYQFHCWYEVTCVQCSLDGVYAFCGQYLNNTTIFHLGSGEKICTVTSEFSGGFVKFLLILDTAQEMVMVDSEGSLSVWNTEDISNPQLTEDFDCRKEDSEVVSIELSEDQSAILICKALSIELLDTGMWKVAEKFRARHNERFVSAVLSKNGDCIIATMENTPAVFFWRRDTGQCLASLQESSGTIVKLVKSSHHNMLLSLSTSGVLSIWDIDIITAMSNIDKTGKPIQSLVLPARGEIIYSLDGSDCVHKWNFSSGFIEAVFKHEGIVEHCVLTSTGDLMVTSDDKSSQYVWHTSSGENLFRINGQRISQLLITHNDQFVVSLCEENASRVWRLATGHRVCNILTTLQNAFITSANTFVVGMTKSKVLAVSLWTGSITKKFCCEDGITIVNFKLIPDCPDVIVFITSAETVNLWSLTDEVICRRVQLPSNFLKNLEDFEISPNGKLGIISRGDENINVLDLHSGKLRVVHASGVIWRQRLSRDGRYLVYICFRNGEEEEENDAISSLIVMRLADGKNIGACSLYKTPTFLALSQRHLNIIVGFDDGSIGIYTVVDRVDAALKIKIATSNSRQIFNNATQTSRPKSNSYSFKVSVDCLWRESTEVFARDSPITVSDSSESNEATPSKKHNSCYDRVCAALESRSHSYTPDN.

5 LRR repeats span residues 386–410 (FYEYKCESLNILHKYILPSKTGHIN), 677–698 (LEDVLALDNSVMNELNENTRPS), 724–747 (VKNVTLLVWANRHLQLIAQKLYLQ), 883–906 (YSQEKELKFLASTLRSIRNKVIAF), and 925–953 (LPKLRHLLLECDKDGPKYCSIVPLHSSMD). Residues 410-737 (NPLVVYGGPC…TLLVWANRHL (328 aa)) enclose the NACHT domain. 11 WD repeats span residues 963-1004 (LASS…LLRQ), 1007-1046 (TAQSVILGMKLSSDEKYLVVATTNNTLLIYDNVNSCLLSE), 1140-1179 (FSGGFVKFLLILDTAQEMVMVDSEGSLSVWNTEDISNPQL), 1229-1271 (RHNE…ASLQ), 1272-1311 (ESSGTIVKLVKSSHHNMLLSLSTSGVLSIWDIDIITAMSN), 1314-1353 (KTGKPIQSLVLPARGEIIYSLDGSDCVHKWNFSSGFIEAV), 1355-1394 (KHEGIVEHCVLTSTGDLMVTSDDKSSQYVWHTSSGENLFR), 1396-1434 (NGQRISQLLITHNDQFVVSLCEENASRVWRLATGHRVCN), 1476-1516 (EDGI…ICRR), 1522-1561 (NFLKNLEDFEISPNGKLGIISRGDENINVLDLHSGKLRVV), and 1614-1653 (SLYKTPTFLALSQRHLNIIVGFDDGSIGIYTVVDRVDAAL). Residues 1702 to 1721 (PITVSDSSESNEATPSKKHN) form a disordered region. A compositionally biased stretch (polar residues) spans 1703–1715 (ITVSDSSESNEAT).

The protein is NACHT and WD repeat domain-containing protein 2 (Nwd2) of Mus musculus (Mouse).